A 599-amino-acid chain; its full sequence is E3 ubiquitin-protein ligase Kcmf1 (599 aa).

The ZZ-type zinc-finger motif lies at 4–60 (HEGVSCDSCLKSNFNGRRYKCLICYDYDLCADCYEDGVTSTRHLVEHPMQCILTRSD). Cysteine 9, cysteine 12, cysteine 24, cysteine 27, cysteine 33, cysteine 36, histidine 46, and histidine 50 together coordinate Zn(2+). A C2H2-type zinc finger spans residues 78-101 (FTCPYCKKMGFSDATLLEHVSAEH). Disordered stretches follow at residues 155–193 (HGGG…PSGR), 229–253 (DRQQ…VSTS), 269–294 (GSGG…NLRT), 466–486 (VEQQ…VNQM), and 507–599 (NTTQ…PDTR). Composition is skewed to low complexity over residues 160 to 170 (RRIPGRTLGGP) and 180 to 192 (SSSS…SPSG). Residues 269–285 (GSGGSGAVGSGSGGGSG) show a composition bias toward gly residues. A compositionally biased stretch (gly residues) spans 513–532 (GTGGLGGAGATAAPGGGASG). Positions 538–547 (TADRGIERRS) are enriched in basic and acidic residues. Low complexity predominate over residues 559–593 (SQQPQQQQQSTANPAASQQKYKQNASAATAAGNTN).

This sequence belongs to the KCMF1 family. As to quaternary structure, interacts with poe.

The catalysed reaction is S-ubiquitinyl-[E2 ubiquitin-conjugating enzyme]-L-cysteine + [acceptor protein]-L-lysine = [E2 ubiquitin-conjugating enzyme]-L-cysteine + N(6)-ubiquitinyl-[acceptor protein]-L-lysine.. In terms of biological role, has intrinsic E3 ubiquitin ligase activity and promotes ubiquitination. Involved in the negative regulation of the Ras/MAPK signaling pathway in the wing by acting with the E2 enzyme Unc6 and the putative E3 ligases poe and Ufd4 to mediate the ubiquitination and proteasomal degradation of rl/MAPK. In Drosophila melanogaster (Fruit fly), this protein is E3 ubiquitin-protein ligase Kcmf1.